Consider the following 156-residue polypeptide: MGRSISVSFGLLVVFLSLSGTGADQDCLPGWSFYEGHCYKVFNVKKTWEDAEKFCQKQSNGKHLATIEWLGKANFVAELVTLMKLETHVWIGLRVEDKRQQCSSHWTDGSAVSYENVVHNTKCFGLDQKTGYRTWVALRCELAYHFICMSRVPRGA.

The first 23 residues, Met1–Ala23, serve as a signal peptide directing secretion. Intrachain disulfides connect Cys27-Cys38, Cys55-Cys148, and Cys123-Cys140. The region spanning Tyr34–Met149 is the C-type lectin domain.

This sequence belongs to the snaclec family. As to quaternary structure, heterodimer; disulfide-linked. As to expression, expressed by the venom gland.

The protein resides in the secreted. Interferes with one step of hemostasis (modulation of platelet aggregation, or coagulation cascade, for example). This is Snaclec A12 from Macrovipera lebetinus (Levantine viper).